The sequence spans 590 residues: Protein I'm not dead yet (590 aa).

11 helical membrane-spanning segments follow: residues Gly43 to Ala63, Ala82 to Met102, Thr115 to His135, Leu153 to Cys173, Leu224 to Gly244, Thr270 to Leu290, Leu329 to Met349, Ser373 to Leu393, Val457 to Phe477, Ala509 to Val529, and Met540 to Gln560.

Belongs to the SLC13A/DASS transporter (TC 2.A.47) family. NADC subfamily. As to expression, in adults, abundantly expressed in the fat body, basolateral region of midgut cells and oenocytes. Low level expression is seen in the halteres, procardia, restricted regions of the esophagus and hindgut, base of the legs and in a subset of cells in the third segment of the antennae.

The protein resides in the basolateral cell membrane. Functionally, cation-independent electroneutral transporter (not associated with membrane depolarization) of a variety of tricarboxylic and dicarboxylic acid-cycle intermediates. There is also small, but detectable, transport of monocarboxylics. Transport is through the epithelium of the gut and across the plasma membranes of organs involved in intermediary metabolism and storage. Affinity for substrates is citrate &gt; succinate &gt; pyruvate. Fumarate, a-ketoglutarate, and glutarate are also transported, but not lactate. Transport mechanism that is not coupled to Na(+), K(+), or Cl(-). Function is shown in Xenopus oocytes and human retinal pigment epithelial (HRPE) cell lines. This is Protein I'm not dead yet (Indy) from Drosophila melanogaster (Fruit fly).